Consider the following 475-residue polypeptide: MAKLHITTWGCQMNEYDSSKMADLLNSTHGLELTDKPEEADVLLLNTCSIREKAQEKVFSQLGRWKNWKKDKPDLIIGVGGCVASQEGEHIRDRAPFVDIVFGPQTLHRLPEMINKIRGGDRAIVDISFPEIEKFDRLPEPRAEGPTAFVSIMEGCNKYCSFCVVPYTRGEEVSRPVDDVLFEIAQLAEQGVREVNLLGQNVNAYRGETFDGGICTFAELLRLVAAIDGIDRVRYTTSHPIEFTDDIIEVYRDTPELVSFLHLPIQSGADRVLTMMKRNHTALEYKAIIRKLREVRPNIQISSDFIVGFPGETAEDFEQTMKVIEQVNFDMSFSFIYSARPGTPAADLPDDISEEEKKARLARLQQRINHQAMQFSRAMLGTEQRVLVEGPSKKDIMELTGRTENNRIVNFQGTPDMIGKFVDIKITDVYTNSLRGEVVRTEDEMGLRVVESAASVIARTRKEDDLGVGKYVVNL.

Residues A2–G119 form the MTTase N-terminal domain. [4Fe-4S] cluster-binding residues include C11, C48, C82, C156, C160, and C163. The Radical SAM core domain maps to R142–Q374. The TRAM domain occupies R377–R440.

Belongs to the methylthiotransferase family. MiaB subfamily. As to quaternary structure, monomer. The cofactor is [4Fe-4S] cluster.

It localises to the cytoplasm. The enzyme catalyses N(6)-dimethylallyladenosine(37) in tRNA + (sulfur carrier)-SH + AH2 + 2 S-adenosyl-L-methionine = 2-methylsulfanyl-N(6)-dimethylallyladenosine(37) in tRNA + (sulfur carrier)-H + 5'-deoxyadenosine + L-methionine + A + S-adenosyl-L-homocysteine + 2 H(+). In terms of biological role, catalyzes the methylthiolation of N6-(dimethylallyl)adenosine (i(6)A), leading to the formation of 2-methylthio-N6-(dimethylallyl)adenosine (ms(2)i(6)A) at position 37 in tRNAs that read codons beginning with uridine. The chain is tRNA-2-methylthio-N(6)-dimethylallyladenosine synthase from Actinobacillus pleuropneumoniae serotype 3 (strain JL03).